The chain runs to 1049 residues: Isoleucine--tRNA ligase (1049 aa).

The 'HIGH' region signature appears at 48–58; that stretch reads PYTTGRIHLGT. Residues 596 to 600 carry the 'KMSKS' region motif; it reads KMSKS. Lys-599 provides a ligand contact to ATP.

It belongs to the class-I aminoacyl-tRNA synthetase family. IleS type 2 subfamily. As to quaternary structure, monomer. The cofactor is Zn(2+).

The protein localises to the cytoplasm. It carries out the reaction tRNA(Ile) + L-isoleucine + ATP = L-isoleucyl-tRNA(Ile) + AMP + diphosphate. Functionally, catalyzes the attachment of isoleucine to tRNA(Ile). As IleRS can inadvertently accommodate and process structurally similar amino acids such as valine, to avoid such errors it has two additional distinct tRNA(Ile)-dependent editing activities. One activity is designated as 'pretransfer' editing and involves the hydrolysis of activated Val-AMP. The other activity is designated 'posttransfer' editing and involves deacylation of mischarged Val-tRNA(Ile). In Methanothrix thermoacetophila (strain DSM 6194 / JCM 14653 / NBRC 101360 / PT) (Methanosaeta thermophila), this protein is Isoleucine--tRNA ligase.